Here is a 565-residue protein sequence, read N- to C-terminus: Dihydroxy-acid dehydratase (565 aa).

Aspartate 80 provides a ligand contact to Mg(2+). Cysteine 121 provides a ligand contact to [2Fe-2S] cluster. 2 residues coordinate Mg(2+): aspartate 122 and lysine 123. Lysine 123 is modified (N6-carboxylysine). Position 194 (cysteine 194) interacts with [2Fe-2S] cluster. Glutamate 447 serves as a coordination point for Mg(2+). Serine 473 (proton acceptor) is an active-site residue.

This sequence belongs to the IlvD/Edd family. In terms of assembly, homodimer. [2Fe-2S] cluster serves as cofactor. Requires Mg(2+) as cofactor.

The enzyme catalyses (2R)-2,3-dihydroxy-3-methylbutanoate = 3-methyl-2-oxobutanoate + H2O. It catalyses the reaction (2R,3R)-2,3-dihydroxy-3-methylpentanoate = (S)-3-methyl-2-oxopentanoate + H2O. It participates in amino-acid biosynthesis; L-isoleucine biosynthesis; L-isoleucine from 2-oxobutanoate: step 3/4. It functions in the pathway amino-acid biosynthesis; L-valine biosynthesis; L-valine from pyruvate: step 3/4. Functionally, functions in the biosynthesis of branched-chain amino acids. Catalyzes the dehydration of (2R,3R)-2,3-dihydroxy-3-methylpentanoate (2,3-dihydroxy-3-methylvalerate) into 2-oxo-3-methylpentanoate (2-oxo-3-methylvalerate) and of (2R)-2,3-dihydroxy-3-methylbutanoate (2,3-dihydroxyisovalerate) into 2-oxo-3-methylbutanoate (2-oxoisovalerate), the penultimate precursor to L-isoleucine and L-valine, respectively. This chain is Dihydroxy-acid dehydratase, found in Pelodictyon phaeoclathratiforme (strain DSM 5477 / BU-1).